The sequence spans 329 residues: Ketol-acid reductoisomerase (NADP(+)) (329 aa).

The KARI N-terminal Rossmann domain occupies 2–182; sequence TQLFYDTDAD…GGTRAGILET (181 aa). NADP(+) is bound by residues 25–28, S51, S53, and 83–86; these read YGSQ and DEFQ. The active site involves H108. Position 134 (G134) interacts with NADP(+). Residues 183 to 328 form the KARI C-terminal knotted domain; it reads NFKEETETDL…KGLRAMFSWL (146 aa). D191, E195, E227, and E231 together coordinate Mg(2+). S252 provides a ligand contact to substrate.

This sequence belongs to the ketol-acid reductoisomerase family. Mg(2+) is required as a cofactor.

It catalyses the reaction (2R)-2,3-dihydroxy-3-methylbutanoate + NADP(+) = (2S)-2-acetolactate + NADPH + H(+). It carries out the reaction (2R,3R)-2,3-dihydroxy-3-methylpentanoate + NADP(+) = (S)-2-ethyl-2-hydroxy-3-oxobutanoate + NADPH + H(+). It functions in the pathway amino-acid biosynthesis; L-isoleucine biosynthesis; L-isoleucine from 2-oxobutanoate: step 2/4. Its pathway is amino-acid biosynthesis; L-valine biosynthesis; L-valine from pyruvate: step 2/4. In terms of biological role, involved in the biosynthesis of branched-chain amino acids (BCAA). Catalyzes an alkyl-migration followed by a ketol-acid reduction of (S)-2-acetolactate (S2AL) to yield (R)-2,3-dihydroxy-isovalerate. In the isomerase reaction, S2AL is rearranged via a Mg-dependent methyl migration to produce 3-hydroxy-3-methyl-2-ketobutyrate (HMKB). In the reductase reaction, this 2-ketoacid undergoes a metal-dependent reduction by NADPH to yield (R)-2,3-dihydroxy-isovalerate. This is Ketol-acid reductoisomerase (NADP(+)) from Prochlorococcus marinus subsp. pastoris (strain CCMP1986 / NIES-2087 / MED4).